The primary structure comprises 305 residues: MSTQYSILFKQEHAHEDAIWSVGWGKNSNDGSELVISGSLDDLVKVWKWSDERLELQSTLEGHQLGVVSVDVSPSGNIMASSSLDAHIRLWDLESGKQIRAIDAGPVDAWSVAFSPDSQHLATGSHVGKVNIFGVETGKKEYSLDTRGKFILSIAYSPDGKYLASGAIDGIINIFDIATGKLLHTLEGHAMPIRSLTFSPDSQLLVTASDDGYIKIYEVQHASLAATLSGHGSWVLNVAFSPDDTHFVSSSSDKSVKVWDVSARTCVHTFLDHQDQVWGVKYNKNGSKIVSVADDQEIHVYDCPI.

WD repeat units follow at residues 14–57, 62–101, 104–143, 146–187, 188–227, 230–269, and 272–305; these read AHED…LELQ, GHQLGVVSVDVSPSGNIMASSSLDAHIRLWDLESGKQIRA, AGPVDAWSVAFSPDSQHLATGSHVGKVNIFGVETGKKEYS, TRGK…HTLE, GHAMPIRSLTFSPDSQLLVTASDDGYIKIYEVQHASLAAT, GHGSWVLNVAFSPDDTHFVSSSSDKSVKVWDVSARTCVHT, and DHQDQVWGVKYNKNGSKIVSVADDQEIHVYDCPI.

Belongs to the SKI8 family. As to quaternary structure, component of the PAF1 complex. Component of the SKI complex.

It localises to the nucleus. The protein resides in the cytoplasm. In terms of biological role, component of the PAF1 complex (PAF1C) which has multiple functions during transcription by RNA polymerase II and is implicated in regulation of development and maintenance of embryonic stem cell pluripotency. PAF1C associates with RNA polymerase II through interaction with POLR2A CTD non-phosphorylated and 'Ser-2'- and 'Ser-5'-phosphorylated forms and is involved in transcriptional elongation, acting both independently and synergistically with TCEA1 and in cooperation with the DSIF complex and HTATSF1. Also acts as a component of the SKI complex, a multiprotein complex that assists the RNA-degrading exosome during the mRNA decay and quality-control pathways. The SKI complex catalyzes mRNA extraction from 80S ribosomal complexes in the 3'-5' direction and channels mRNA to the cytosolic exosome for degradation. The polypeptide is Superkiller complex protein 8 (skic8) (Xenopus tropicalis (Western clawed frog)).